A 323-amino-acid polypeptide reads, in one-letter code: tRNA U34 carboxymethyltransferase (323 aa).

Residues Lys91, Trp105, Lys110, Gly130, 152-154, 181-182, Met196, Tyr200, and Arg315 each bind carboxy-S-adenosyl-L-methionine; these read DPT and IE.

The protein belongs to the class I-like SAM-binding methyltransferase superfamily. CmoB family. Homotetramer.

It carries out the reaction carboxy-S-adenosyl-L-methionine + 5-hydroxyuridine(34) in tRNA = 5-carboxymethoxyuridine(34) in tRNA + S-adenosyl-L-homocysteine + H(+). Functionally, catalyzes carboxymethyl transfer from carboxy-S-adenosyl-L-methionine (Cx-SAM) to 5-hydroxyuridine (ho5U) to form 5-carboxymethoxyuridine (cmo5U) at position 34 in tRNAs. In Shigella flexneri, this protein is tRNA U34 carboxymethyltransferase.